The chain runs to 159 residues: Ribosomal RNA large subunit methyltransferase H (159 aa).

Residues L76, G108, and 127–132 (FGLLTL) contribute to the S-adenosyl-L-methionine site.

It belongs to the RNA methyltransferase RlmH family. As to quaternary structure, homodimer.

Its subcellular location is the cytoplasm. It catalyses the reaction pseudouridine(1915) in 23S rRNA + S-adenosyl-L-methionine = N(3)-methylpseudouridine(1915) in 23S rRNA + S-adenosyl-L-homocysteine + H(+). Functionally, specifically methylates the pseudouridine at position 1915 (m3Psi1915) in 23S rRNA. In Streptococcus equi subsp. zooepidemicus (strain MGCS10565), this protein is Ribosomal RNA large subunit methyltransferase H.